We begin with the raw amino-acid sequence, 405 residues long: Imidazolonepropionase (405 aa).

Residues His73 and His75 each coordinate Fe(3+). Positions 73 and 75 each coordinate Zn(2+). Residues Arg82, Tyr145, and His178 each coordinate 4-imidazolone-5-propanoate. Tyr145 is an N-formimidoyl-L-glutamate binding site. Residue His243 participates in Fe(3+) binding. Position 243 (His243) interacts with Zn(2+). Residue Gln246 participates in 4-imidazolone-5-propanoate binding. Residue Asp318 coordinates Fe(3+). Asp318 is a binding site for Zn(2+). Residues Asn320 and Gly322 each contribute to the N-formimidoyl-L-glutamate site. Thr323 contributes to the 4-imidazolone-5-propanoate binding site.

The protein belongs to the metallo-dependent hydrolases superfamily. HutI family. Requires Zn(2+) as cofactor. It depends on Fe(3+) as a cofactor.

The protein localises to the cytoplasm. It catalyses the reaction 4-imidazolone-5-propanoate + H2O = N-formimidoyl-L-glutamate. Its pathway is amino-acid degradation; L-histidine degradation into L-glutamate; N-formimidoyl-L-glutamate from L-histidine: step 3/3. Catalyzes the hydrolytic cleavage of the carbon-nitrogen bond in imidazolone-5-propanoate to yield N-formimidoyl-L-glutamate. It is the third step in the universal histidine degradation pathway. In Brucella anthropi (strain ATCC 49188 / DSM 6882 / CCUG 24695 / JCM 21032 / LMG 3331 / NBRC 15819 / NCTC 12168 / Alc 37) (Ochrobactrum anthropi), this protein is Imidazolonepropionase.